We begin with the raw amino-acid sequence, 260 residues long: ATP-dependent zinc metalloprotease FTSH, chloroplastic (260 aa).

His-219 contributes to the Zn(2+) binding site. Glu-220 is an active-site residue. Residue His-223 participates in Zn(2+) binding.

The protein in the N-terminal section; belongs to the AAA ATPase family. In the C-terminal section; belongs to the peptidase M41 family. Zn(2+) is required as a cofactor.

The protein localises to the plastid. The protein resides in the chloroplast thylakoid membrane. In terms of biological role, probable ATP-dependent zinc metallopeptidase. In Helianthus annuus (Common sunflower), this protein is ATP-dependent zinc metalloprotease FTSH, chloroplastic.